An 89-amino-acid chain; its full sequence is Translation initiation factor IF-1 1 (89 aa).

One can recognise an S1-like domain in the interval 1 to 73 (MSNKEQLIEM…TKGRITFRHL (73 aa)).

This sequence belongs to the IF-1 family. Component of the 30S ribosomal translation pre-initiation complex which assembles on the 30S ribosome in the order IF-2 and IF-3, IF-1 and N-formylmethionyl-tRNA(fMet); mRNA recruitment can occur at any time during PIC assembly.

It is found in the cytoplasm. Its function is as follows. One of the essential components for the initiation of protein synthesis. Stabilizes the binding of IF-2 and IF-3 on the 30S subunit to which N-formylmethionyl-tRNA(fMet) subsequently binds. Helps modulate mRNA selection, yielding the 30S pre-initiation complex (PIC). Upon addition of the 50S ribosomal subunit IF-1, IF-2 and IF-3 are released leaving the mature 70S translation initiation complex. The polypeptide is Translation initiation factor IF-1 1 (Acidovorax sp. (strain JS42)).